A 259-amino-acid polypeptide reads, in one-letter code: Major prion protein (259 aa).

The first 24 residues, 1-24 (MGKIQLGYWILVLFIVTWSDLGLC), serve as a signal peptide directing secretion. An interaction with GRB2, ERI3 and SYN1 region spans residues 25 to 235 (KKPKPRPGGG…EYEAAAQRAY (211 aa)). Residues 29 to 110 (PRPGGGWNSG…GYNKWKPDKP (82 aa)) are disordered. Cu(2+)-binding residues include glycine 63, glycine 64, histidine 72, glycine 74, histidine 82, glycine 84, histidine 92, and glycine 94. Positions 91 to 101 (PHGGSNWGQGG) are enriched in gly residues. The cysteines at positions 184 and 219 are disulfide-linked. Residues asparagine 186 and asparagine 202 are each glycosylated (N-linked (GlcNAc...) asparagine). Asparagine 236 is lipidated: GPI-anchor amidated asparagine. Residues 237–259 (MAFFSAPPVTLLFLSFLIFLIVS) constitute a propeptide, removed in mature form.

This sequence belongs to the prion family. Monomer and homodimer. Has a tendency to aggregate into amyloid fibrils containing a cross-beta spine, formed by a steric zipper of superposed beta-strands. Soluble oligomers may represent an intermediate stage on the path to fibril formation. Copper binding may promote oligomerization. Interacts with GRB2, APP, ERI3/PRNPIP and SYN1. Mislocalized cytosolically exposed PrP interacts with MGRN1; this interaction alters MGRN1 subcellular location and causes lysosomal enlargement. Interacts with KIAA1191.

It localises to the cell membrane. The protein localises to the golgi apparatus. Its primary physiological function is unclear. Has cytoprotective activity against internal or environmental stresses. May play a role in neuronal development and synaptic plasticity. May be required for neuronal myelin sheath maintenance. May play a role in iron uptake and iron homeostasis. Soluble oligomers are toxic to cultured neuroblastoma cells and induce apoptosis (in vitro). Association with GPC1 (via its heparan sulfate chains) targets PRNP to lipid rafts. Also provides Cu(2+) or Zn(2+) for the ascorbate-mediated GPC1 deaminase degradation of its heparan sulfate side chains. The sequence is that of Major prion protein (PRNP) from Trichosurus vulpecula (Brush-tailed possum).